The chain runs to 285 residues: Nucleotide-binding protein in ptsN-ptsO intergenic region (285 aa).

8-15 is a binding site for ATP; the sequence is GRSGSGKS. Residue 60 to 63 participates in GTP binding; that stretch reads DARN.

This sequence belongs to the RapZ-like family.

Functionally, displays ATPase and GTPase activities. The polypeptide is Nucleotide-binding protein in ptsN-ptsO intergenic region (Stutzerimonas stutzeri (Pseudomonas stutzeri)).